We begin with the raw amino-acid sequence, 574 residues long: Septation ring formation regulator EzrA (574 aa).

The Extracellular portion of the chain corresponds to 1-7 (MSNGLII). A helical membrane pass occupies residues 8–26 (LIIVIAVALILAYVAAVVL). The Cytoplasmic segment spans residues 27-574 (RKRNETLLDS…YEKTRENIRF (548 aa)). Coiled-coil stretches lie at residues 104 to 141 (LKAKHAIDSIESQINLVEEDIELIREALADLEKQEAKN), 267 to 424 (NITQ…QKVN), and 456 to 524 (ASDH…SIQE).

The protein belongs to the EzrA family.

It is found in the cell membrane. In terms of biological role, negative regulator of FtsZ ring formation; modulates the frequency and position of FtsZ ring formation. Inhibits FtsZ ring formation at polar sites. Interacts either with FtsZ or with one of its binding partners to promote depolymerization. This chain is Septation ring formation regulator EzrA, found in Streptococcus gordonii (strain Challis / ATCC 35105 / BCRC 15272 / CH1 / DL1 / V288).